We begin with the raw amino-acid sequence, 669 residues long: Cell surface receptor daf-1 (669 aa).

An N-terminal signal peptide occupies residues 1–19; sequence MRIRHVVFCLLALVYGAET. Topologically, residues 20–170 are extracellular; the sequence is SDDDLDERTN…APGPQQSSTW (151 aa). Residues N49, N79, N133, and N154 are each glycosylated (N-linked (GlcNAc...) asparagine). The helical transmembrane segment at 171 to 191 threads the bilayer; that stretch reads LILTILALLTFIVLLGIAIFL. Over 192–669 the chain is Cytoplasmic; it reads TRKSWEAKFD…NDDSSRPLLG (478 aa). Residues 262 to 292 form the GS domain; sequence NNMKDMLDVLEETSGSGMGPTTLHKLTIGGQ. Residues 293-593 form the Protein kinase domain; that stretch reads IRLTGRVGSG…KRMDERQQLL (301 aa). ATP contacts are provided by residues 299–307 and K320; that span reads VGSGRFGNV. D423 acts as the Proton acceptor in catalysis. Basic and acidic residues-rich tracts occupy residues 611–624 and 633–650; these read DRKILGPQKPKDES and VQKEIDREDEQENWRETA. Residues 611–669 are disordered; that stretch reads DRKILGPQKPKDESPANGAPRIVQKEIDREDEQENWRETAKTPNGHISSNDDSSRPLLG. Residues 651 to 661 show a composition bias toward polar residues; that stretch reads KTPNGHISSND.

Belongs to the protein kinase superfamily. TKL Ser/Thr protein kinase family. TGFB receptor subfamily. As to quaternary structure, may interact with daf-4 to regulate dauer larva development. In terms of tissue distribution, head and ventral nerve cord from embryos to adults. Expressed in many sensory neurons. Subset of head neurons show coexpression with daf-4 when dauer/nondauer decision is made. Also expressed in non-neuronal cells: membraneous sheath surrounding the distal end of the intestine and in the distal tip cell of the gonad.

The protein localises to the membrane. The catalysed reaction is L-threonyl-[receptor-protein] + ATP = O-phospho-L-threonyl-[receptor-protein] + ADP + H(+). It carries out the reaction L-seryl-[receptor-protein] + ATP = O-phospho-L-seryl-[receptor-protein] + ADP + H(+). Functionally, probably involved in a TGF-beta pathway. May be a receptor for TGF-beta-like ligand daf-7. Controls the decision of whether or not larvae enter a developmentally arrested state, known as dauer, in response to environmental conditions. Involved in regulating entry into quiescence triggered by satiety. Involved in sensitivity to CO2 levels. In AWC neurons, acts to promote expression of srsx-3, a member of the GPCR family. The sequence is that of Cell surface receptor daf-1 (daf-1) from Caenorhabditis elegans.